The primary structure comprises 129 residues: Glycine cleavage system H protein (129 aa).

Residues 23-104 form the Lipoyl-binding domain; it reads SVTVGITQHA…CYAAWLFKLK (82 aa). Lys-64 is subject to N6-lipoyllysine.

This sequence belongs to the GcvH family. In terms of assembly, the glycine cleavage system is composed of four proteins: P, T, L and H. (R)-lipoate is required as a cofactor.

The glycine cleavage system catalyzes the degradation of glycine. The H protein shuttles the methylamine group of glycine from the P protein to the T protein. The chain is Glycine cleavage system H protein from Nitrosomonas europaea (strain ATCC 19718 / CIP 103999 / KCTC 2705 / NBRC 14298).